The chain runs to 385 residues: Histidinol-phosphate aminotransferase (385 aa).

Lys230 carries the N6-(pyridoxal phosphate)lysine modification.

The protein belongs to the class-II pyridoxal-phosphate-dependent aminotransferase family. It depends on pyridoxal 5'-phosphate as a cofactor.

It carries out the reaction L-histidinol phosphate + 2-oxoglutarate = 3-(imidazol-4-yl)-2-oxopropyl phosphate + L-glutamate. Its pathway is amino-acid biosynthesis; L-histidine biosynthesis; L-histidine from 5-phospho-alpha-D-ribose 1-diphosphate: step 7/9. This Saccharomyces cerevisiae (strain ATCC 204508 / S288c) (Baker's yeast) protein is Histidinol-phosphate aminotransferase.